The following is an 85-amino-acid chain: Small ribosomal subunit protein bS20 (85 aa).

The disordered stretch occupies residues M1–A22. The segment covering T13–A22 has biased composition (polar residues).

The protein belongs to the bacterial ribosomal protein bS20 family.

Binds directly to 16S ribosomal RNA. This Lactobacillus acidophilus (strain ATCC 700396 / NCK56 / N2 / NCFM) protein is Small ribosomal subunit protein bS20.